A 98-amino-acid polypeptide reads, in one-letter code: Ferredoxin-like protein (98 aa).

This sequence to ferredoxins from P.putida and C.tartarivorum, ferredoxin I from A.vinelandii, ferredoxin II from D.desulfuricans.

In terms of biological role, could be a 3Fe-4S cluster-containing protein. The sequence is that of Ferredoxin-like protein (fixX) from Rhizobium leguminosarum bv. trifolii.